Here is a 283-residue protein sequence, read N- to C-terminus: MTQPTSQAHIAACLIGWPAAHSRSPLIHHYWLRKLGIEGGYSIESVPPEGFAEFVLHLKTHGYSGANVTIPHKERALQLTVPDQRACAVGAANTLYYDGSVLRSTNTDVEGFISNLDASAPGWDRTPHAVVLGAGGSSRAVVFGLLERGIQRIALANRSIERARALADLFGERVVPIAWTDAPAALPGAGLLVNTTSLGMKGQPSLDLDLEPLPADATVADLVYVPLETELLSEARARGLRTADGLGMLLHQAVRGFELWFGARPEVTSELRALVEADLVAHA.

Shikimate is bound by residues 22 to 24 (SRS) and threonine 69. Lysine 73 serves as the catalytic Proton acceptor. Asparagine 93 and aspartate 108 together coordinate shikimate. Residues 133–137 (GAGGS) and leucine 222 each bind NADP(+). Tyrosine 224 serves as a coordination point for shikimate. Glycine 245 is a binding site for NADP(+).

Belongs to the shikimate dehydrogenase family. In terms of assembly, homodimer.

It catalyses the reaction shikimate + NADP(+) = 3-dehydroshikimate + NADPH + H(+). It functions in the pathway metabolic intermediate biosynthesis; chorismate biosynthesis; chorismate from D-erythrose 4-phosphate and phosphoenolpyruvate: step 4/7. Its function is as follows. Involved in the biosynthesis of the chorismate, which leads to the biosynthesis of aromatic amino acids. Catalyzes the reversible NADPH linked reduction of 3-dehydroshikimate (DHSA) to yield shikimate (SA). The sequence is that of Shikimate dehydrogenase (NADP(+)) from Rhodopseudomonas palustris (strain BisB5).